Consider the following 396-residue polypeptide: G-protein coupled receptor 84 (396 aa).

Topologically, residues 1–26 are extracellular; the sequence is MWNASDVNFSCYHESVLGYRYVAVSW. 2 N-linked (GlcNAc...) asparagine glycosylation sites follow: Asn3 and Asn8. Residues 27-47 traverse the membrane as a helical segment; that stretch reads GIVVAVTGTVGNVLTLLALAI. The Cytoplasmic segment spans residues 48 to 57; it reads QPKLRTRFNL. Residues 58–78 traverse the membrane as a helical segment; the sequence is LIANLTVADLLYCTLLQPFSV. Residues 79–94 lie on the Extracellular side of the membrane; sequence DTYLHLHWRTGATFCQ. A helical membrane pass occupies residues 95–115; it reads IFGFLLFVSNSVSILTLCLIA. At 116 to 144 the chain is on the cytoplasmic side; it reads LGRYLLIAHPKLFPQVFSAKGIVLALVST. Residues 145–165 traverse the membrane as a helical segment; that stretch reads WVVAVASFAPLWPIYILVPVV. Over 166–180 the chain is Extracellular; that stretch reads CTCSFDRIRGQPYTT. A helical membrane pass occupies residues 181–201; the sequence is ILMGIYFVVGLSSVGVFYCLI. Over 202-320 the chain is Cytoplasmic; it reads HQQVKRAAQA…PSEFGKVTRM (119 aa). Ser221 and Ser224 each carry phosphoserine. The tract at residues 243–310 is disordered; that stretch reads SGLASGGPSE…TKGAQRAQDS (68 aa). 2 positions are modified to phosphothreonine: Thr263 and Thr264. The helical transmembrane segment at 321–341 threads the bilayer; the sequence is CFAVFLCFTLSYIPFLLLNIL. Residues 342–352 lie on the Extracellular side of the membrane; the sequence is DAKVQAPRVVH. A helical membrane pass occupies residues 353-373; it reads MLAANLTWLNGCINPVLYAAM. Topologically, residues 374-396 are cytoplasmic; the sequence is NRQFRQAYGSLLRRGPQSFHRFH.

Belongs to the G-protein coupled receptor 1 family. In terms of assembly, interacts with ARRB2 and ARR3. Phosphorylated by a subset of GPR84-activating ligands. Constitutively phosphorylated at Ser-221 and Ser-224 in the absence of 2-HTP. By contrast, Thr-263 and Thr-264 are phosphorylated only following prior cell treatment with 2-HTP.

The protein localises to the cell membrane. In terms of biological role, g protein-coupled receptor that responds endogenously to dietary fatty acids or nutrient, specifically medium-chain free fatty acid (FFA) with carbon chain lengths of C9 to C14. Capric acid (C10:0), undecanoic acid (C11:0) and lauric acid (C12:0) are the most potent agonists. In immune cells, functions as a pro-inflammatory receptor via 6-OAU and promotes the expression of pro-inflammatory mediators such as TNFalpha, IL-6 and IL-12B as well as stimulating chemotactic responses through activation of signaling mediators AKT, ERK and NF-kappa-B. In addition, triggers increased bacterial adhesion and phagocytosis in macrophages and regulates pro-inflammatory function via enhancing NLRP3 inflammasome activation. Also plays an important role in inflammation by modulating neutrophil functions. Mechanistically, promotes neutrophil chemotaxis, reactive oxygen species (ROS) production and degranulation via LYN-AKT/ERK pathway. To regulate ROS, communicates with the two formyl peptide receptors FPR2 and FPR1 to control the NADPH oxidase activity in neutrophils. The protein is G-protein coupled receptor 84 (GPR84) of Bos taurus (Bovine).